Here is a 189-residue protein sequence, read N- to C-terminus: Putative manganese efflux pump MntP (189 aa).

Transmembrane regions (helical) follow at residues 2-22 (SLTE…AVSI), 36-56 (ILQM…IGYY), 71-91 (WIAF…SITA), 106-126 (LLLV…VSLS), 132-152 (ILYS…AAIL), and 167-187 (IVGG…HMFF).

This sequence belongs to the MntP (TC 9.B.29) family.

It is found in the cell membrane. In terms of biological role, probably functions as a manganese efflux pump. The sequence is that of Putative manganese efflux pump MntP from Ruminiclostridium cellulolyticum (strain ATCC 35319 / DSM 5812 / JCM 6584 / H10) (Clostridium cellulolyticum).